A 340-amino-acid polypeptide reads, in one-letter code: GTP 3',8-cyclase (340 aa).

The Radical SAM core domain maps to lysine 8–valine 229. Arginine 17 is a GTP binding site. The [4Fe-4S] cluster site is built by cysteine 24 and cysteine 28. Tyrosine 30 serves as a coordination point for S-adenosyl-L-methionine. Cysteine 31 lines the [4Fe-4S] cluster pocket. Arginine 71 is a GTP binding site. Glycine 75 lines the S-adenosyl-L-methionine pocket. Threonine 102 is a GTP binding site. Serine 126 contributes to the S-adenosyl-L-methionine binding site. Lysine 163 contacts GTP. S-adenosyl-L-methionine is bound at residue methionine 197. Residues cysteine 261 and cysteine 264 each contribute to the [4Fe-4S] cluster site. Arginine 266–arginine 268 is a GTP binding site. A [4Fe-4S] cluster-binding site is contributed by cysteine 278.

This sequence belongs to the radical SAM superfamily. MoaA family. As to quaternary structure, monomer and homodimer. Requires [4Fe-4S] cluster as cofactor.

It catalyses the reaction GTP + AH2 + S-adenosyl-L-methionine = (8S)-3',8-cyclo-7,8-dihydroguanosine 5'-triphosphate + 5'-deoxyadenosine + L-methionine + A + H(+). The protein operates within cofactor biosynthesis; molybdopterin biosynthesis. Catalyzes the cyclization of GTP to (8S)-3',8-cyclo-7,8-dihydroguanosine 5'-triphosphate. In Staphylococcus epidermidis (strain ATCC 35984 / DSM 28319 / BCRC 17069 / CCUG 31568 / BM 3577 / RP62A), this protein is GTP 3',8-cyclase.